We begin with the raw amino-acid sequence, 316 residues long: Probable cell division protein WhiA (316 aa).

The H-T-H motif DNA-binding region spans 274–308; sequence SLKELGEMVSTGVISKSGVNHRLRKIDEIAEKLRN.

This sequence belongs to the WhiA family.

Involved in cell division and chromosome segregation. This Macrococcus caseolyticus (strain JCSC5402) (Macrococcoides caseolyticum) protein is Probable cell division protein WhiA.